Here is a 644-residue protein sequence, read N- to C-terminus: Exoribonuclease 2 (644 aa).

The 327-residue stretch at 190–516 (REDLTALDFI…INHRLLKALI (327 aa)) folds into the RNB domain. In terms of domain architecture, S1 motif spans 562–644 (DSRFAAEIID…ENRSVIARPV (83 aa)).

This sequence belongs to the RNR ribonuclease family. RNase II subfamily.

It is found in the cytoplasm. It catalyses the reaction Exonucleolytic cleavage in the 3'- to 5'-direction to yield nucleoside 5'-phosphates.. Its function is as follows. Involved in mRNA degradation. Hydrolyzes single-stranded polyribonucleotides processively in the 3' to 5' direction. The sequence is that of Exoribonuclease 2 from Sodalis glossinidius (strain morsitans).